The chain runs to 340 residues: Anthranilate phosphoribosyltransferase (340 aa).

5-phospho-alpha-D-ribose 1-diphosphate contacts are provided by residues Gly78, 81-82, Thr86, 88-91, 106-114, and Ser118; these read GD, NIST, and KHGNRSVSS. Gly78 contacts anthranilate. Ser90 is a Mg(2+) binding site. Asn109 is an anthranilate binding site. Arg164 contributes to the anthranilate binding site. Mg(2+)-binding residues include Asp223 and Glu224.

This sequence belongs to the anthranilate phosphoribosyltransferase family. As to quaternary structure, homodimer. Mg(2+) is required as a cofactor.

The enzyme catalyses N-(5-phospho-beta-D-ribosyl)anthranilate + diphosphate = 5-phospho-alpha-D-ribose 1-diphosphate + anthranilate. Its pathway is amino-acid biosynthesis; L-tryptophan biosynthesis; L-tryptophan from chorismate: step 2/5. In terms of biological role, catalyzes the transfer of the phosphoribosyl group of 5-phosphorylribose-1-pyrophosphate (PRPP) to anthranilate to yield N-(5'-phosphoribosyl)-anthranilate (PRA). The chain is Anthranilate phosphoribosyltransferase from Bacillus pumilus (Bacillus mesentericus).